Reading from the N-terminus, the 364-residue chain is Medium-wave-sensitive opsin 1 (364 aa).

The interval 1-23 is disordered; the sequence is MTQPWGPQMLAGGQPPESHEDST. At 1–52 the chain is on the extracellular side; the sequence is MTQPWGPQMLAGGQPPESHEDSTQASIFTYTNSNSTRGPFEGPNFHIAPRWV. The interval 17 to 43 is required for 11-cis-retinal regeneration; it reads ESHEDSTQASIFTYTNSNSTRGPFEGP. An N-linked (GlcNAc...) asparagine glycan is attached at asparagine 34. A helical transmembrane segment spans residues 53 to 77; sequence YHLTSAWMILVVIASVFTNGLVLVA. The Cytoplasmic portion of the chain corresponds to 78–89; that stretch reads TMRFKKLRHPLN. Residues 90–115 traverse the membrane as a helical segment; the sequence is WILVNLAVADLAETVIASTISVVNQF. At 116–129 the chain is on the extracellular side; it reads YGYFVLGHPLCVVE. Cysteine 126 and cysteine 203 form a disulfide bridge. The helical transmembrane segment at 130-149 threads the bilayer; the sequence is GYTVSLCGITGLWSLAIISW. Topologically, residues 150 to 168 are cytoplasmic; that stretch reads ERWLVVCKPFGNVRFDAKL. A helical membrane pass occupies residues 169-192; it reads AIAGIAFSWIWAAVWTAPPIFGWS. Residues 193 to 218 are Extracellular-facing; the sequence is RYWPYGLKTSCGPDVFSGTSYPGVQS. A helical transmembrane segment spans residues 219 to 246; it reads YMMVLMVTCCIIPLSVIVLCYLQVWMAI. At 247-268 the chain is on the cytoplasmic side; sequence RTVAKQQKESESTQKAEKEVTR. Residues 269-292 traverse the membrane as a helical segment; that stretch reads MVVVMVFAYCLCWGPYTFFACFAT. The Extracellular portion of the chain corresponds to 293 to 300; that stretch reads AHPGYSFH. The chain crosses the membrane as a helical span at residues 301 to 325; that stretch reads PLVAAIPSYFAKSATIYNPIIYVFM. Lysine 312 carries the post-translational modification N6-(retinylidene)lysine. At 326–364 the chain is on the cytoplasmic side; that stretch reads NRQFRNCILQLFGKKVEDSSELSSASRTEASSVSSVSPA.

It belongs to the G-protein coupled receptor 1 family. Opsin subfamily. In terms of assembly, monomer. Homodimer. Homotetramer. In terms of processing, O-glycosylated. Phosphorylated on some or all of the serine and threonine residues present in the C-terminal region. As to expression, expressed in cone photoreceptor cells.

The protein resides in the membrane. Its function is as follows. Visual pigments are the light-absorbing molecules that mediate vision. They consist of an apoprotein, opsin, covalently linked to cis-retinal. May increase spectral sensitivity in dim light. This is Medium-wave-sensitive opsin 1 (OPN1MW) from Oryctolagus cuniculus (Rabbit).